The following is a 225-amino-acid chain: Uracil-DNA glycosylase 1 (225 aa).

The Proton acceptor role is filled by Asp-68.

The protein belongs to the uracil-DNA glycosylase (UDG) superfamily. UNG family.

It localises to the cytoplasm. It catalyses the reaction Hydrolyzes single-stranded DNA or mismatched double-stranded DNA and polynucleotides, releasing free uracil.. Its function is as follows. Excises uracil residues from the DNA which can arise as a result of misincorporation of dUMP residues by DNA polymerase or due to deamination of cytosine. This Streptomyces avermitilis (strain ATCC 31267 / DSM 46492 / JCM 5070 / NBRC 14893 / NCIMB 12804 / NRRL 8165 / MA-4680) protein is Uracil-DNA glycosylase 1 (ung1).